We begin with the raw amino-acid sequence, 409 residues long: Glucose-1-phosphate adenylyltransferase (409 aa).

Alpha-D-glucose 1-phosphate contacts are provided by residues Gly-168, 183 to 184 (EK), and Ser-201.

Belongs to the bacterial/plant glucose-1-phosphate adenylyltransferase family. In terms of assembly, homotetramer.

It carries out the reaction alpha-D-glucose 1-phosphate + ATP + H(+) = ADP-alpha-D-glucose + diphosphate. It participates in glycan biosynthesis; glycogen biosynthesis. Involved in the biosynthesis of ADP-glucose, a building block required for the elongation reactions to produce glycogen. Catalyzes the reaction between ATP and alpha-D-glucose 1-phosphate (G1P) to produce pyrophosphate and ADP-Glc. This Corynebacterium efficiens (strain DSM 44549 / YS-314 / AJ 12310 / JCM 11189 / NBRC 100395) protein is Glucose-1-phosphate adenylyltransferase.